Consider the following 220-residue polypeptide: Germin-like protein subfamily T member 2 (220 aa).

Residues 1 to 27 form the signal peptide; sequence MTTLQISSSLFRSFLLVICVFVIPSLS. An intrachain disulfide couples C37 to C52. The Cupin type-1 domain occupies 64–212; the sequence is SGLGGPLNTS…TFRTDDVTVN (149 aa). A glycan (N-linked (GlcNAc...) asparagine) is linked at N71. The Mn(2+) site is built by H112, H114, and E119. A glycan (N-linked (GlcNAc...) asparagine) is linked at N136. A Mn(2+)-binding site is contributed by H158.

Belongs to the germin family. Oligomer (believed to be a pentamer but probably hexamer).

The protein resides in the secreted. It localises to the extracellular space. It is found in the apoplast. Its function is as follows. May play a role in plant defense. Probably has no oxalate oxidase activity even if the active site is conserved. The polypeptide is Germin-like protein subfamily T member 2 (Arabidopsis thaliana (Mouse-ear cress)).